We begin with the raw amino-acid sequence, 635 residues long: Early transcription factor 70 kDa subunit (635 aa).

One can recognise a Helicase ATP-binding domain in the interval 32 to 185; sequence RSIIDENKSV…SNIISLMSDE (154 aa). 45–52 provides a ligand contact to ATP; that stretch reads HIMGSGKT. Positions 135-138 match the DEXH box motif; it reads DEAH. One can recognise a Helicase C-terminal domain in the interval 326–505; it reads KFKYFINKIE…TLPFDIKKLL (180 aa).

It belongs to the helicase family. VETF subfamily. As to quaternary structure, heterodimer of a 70 kDa and a 82 kDa subunit. Part of the early transcription complex composed of ETF, RAP94, and the DNA-directed RNA polymerase.

It localises to the virion. Acts with RNA polymerase to initiate transcription from early gene promoters. Is recruited by the RPO-associated protein of 94 kDa (RAP94) to form the early transcription complex, which also contains the core RNA polymerase. ETF heterodimer binds to early gene promoters. The sequence is that of Early transcription factor 70 kDa subunit (VETFS) from Oryctolagus cuniculus (Rabbit).